Here is a 382-residue protein sequence, read N- to C-terminus: Anhydro-N-acetylmuramic acid kinase (382 aa).

9–16 (GTSLDGID) contributes to the ATP binding site.

The protein belongs to the anhydro-N-acetylmuramic acid kinase family.

The enzyme catalyses 1,6-anhydro-N-acetyl-beta-muramate + ATP + H2O = N-acetyl-D-muramate 6-phosphate + ADP + H(+). The protein operates within amino-sugar metabolism; 1,6-anhydro-N-acetylmuramate degradation. Its pathway is cell wall biogenesis; peptidoglycan recycling. In terms of biological role, catalyzes the specific phosphorylation of 1,6-anhydro-N-acetylmuramic acid (anhMurNAc) with the simultaneous cleavage of the 1,6-anhydro ring, generating MurNAc-6-P. Is required for the utilization of anhMurNAc either imported from the medium or derived from its own cell wall murein, and thus plays a role in cell wall recycling. This is Anhydro-N-acetylmuramic acid kinase from Bacillus cereus (strain G9842).